Reading from the N-terminus, the 210-residue chain is MDKQQLETTVTKVLDEMRERPIPLGISNRHIHLCAEDYDRLFPNHPISEKKELLQPGQYAADQTVTLVGPKGQLKNVRLLGPLRSTSQVEISRTDARTLGIAAPLRMSGSIEGTPGVRLISPFAELDLASGVIVAQRHIHMSPLDALILRVSHGDKVSVAINGDERRLIFDNVAVRVSPDMRLEMHIDTDEANAAGADNPQAFATLVSPR.

A CoA-binding site is contributed by 26–28 (ISN). Zn(2+)-binding residues include His30 and His32. Residues Lys71 and Arg78 each contribute to the CoA site. Arg84 is a binding site for phosphate. Residues Glu90, His138, His140, and His186 each contribute to the Zn(2+) site. Asn193 serves as a coordination point for CoA.

The protein belongs to the PduL family. Zn(2+) is required as a cofactor.

The protein resides in the bacterial microcompartment. It catalyses the reaction propanoyl-CoA + phosphate = propanoyl phosphate + CoA. It participates in polyol metabolism; 1,2-propanediol degradation. In terms of biological role, involved in 1,2-propanediol (1,2-PD) utilization within the bacterial microcompartment (BMC) dedicated to 1,2-PD degradation by catalyzing the conversion of propanoyl-CoA to propanoyl-phosphate. Required for optimal growth on 1,2-PD. CoA is regenerated within the BMC (for use by PduP) via this enzyme, although there must also be cofactor transport across the BMC. Directly targeted to the BMC. Expression of a cosmid containing the full 21-gene pdu operon in E.coli allows E.coli to grow on 1,2-propanediol (1,2-PD) with the appearance of bacterial microcompartments (BMC) in its cytoplasm. Its function is as follows. The 1,2-PD-specific bacterial microcompartment (BMC) concentrates low levels of 1,2-PD catabolic enzymes, concentrates volatile reaction intermediates thus enhancing pathway flux and keeps the level of toxic, mutagenic propionaldehyde low. The polypeptide is Phosphate propanoyltransferase (Citrobacter freundii).